A 457-amino-acid chain; its full sequence is Argininosuccinate lyase (457 aa).

Belongs to the lyase 1 family. Argininosuccinate lyase subfamily.

Its subcellular location is the cytoplasm. It carries out the reaction 2-(N(omega)-L-arginino)succinate = fumarate + L-arginine. The protein operates within amino-acid biosynthesis; L-arginine biosynthesis; L-arginine from L-ornithine and carbamoyl phosphate: step 3/3. In Shigella dysenteriae serotype 1 (strain Sd197), this protein is Argininosuccinate lyase.